The primary structure comprises 644 residues: DNA gyrase subunit B (644 aa).

A Toprim domain is found at 429–543 (CEIFLVEGDS…AGYVYIAQPP (115 aa)). The Mg(2+) site is built by E435, D508, and D510.

Belongs to the type II topoisomerase GyrB family. In terms of assembly, heterotetramer, composed of two GyrA and two GyrB chains. In the heterotetramer, GyrA contains the active site tyrosine that forms a transient covalent intermediate with DNA, while GyrB binds cofactors and catalyzes ATP hydrolysis. Mg(2+) is required as a cofactor. The cofactor is Mn(2+). It depends on Ca(2+) as a cofactor.

The protein localises to the cytoplasm. It catalyses the reaction ATP-dependent breakage, passage and rejoining of double-stranded DNA.. Its function is as follows. A type II topoisomerase that negatively supercoils closed circular double-stranded (ds) DNA in an ATP-dependent manner to modulate DNA topology and maintain chromosomes in an underwound state. Negative supercoiling favors strand separation, and DNA replication, transcription, recombination and repair, all of which involve strand separation. Also able to catalyze the interconversion of other topological isomers of dsDNA rings, including catenanes and knotted rings. Type II topoisomerases break and join 2 DNA strands simultaneously in an ATP-dependent manner. The chain is DNA gyrase subunit B from Staphylococcus aureus (strain Mu50 / ATCC 700699).